Consider the following 271-residue polypeptide: 3-methyl-2-oxobutanoate hydroxymethyltransferase (271 aa).

Mg(2+) is bound by residues D51 and D90. 3-methyl-2-oxobutanoate is bound by residues 51–52 (DS), D90, and K118. A Mg(2+)-binding site is contributed by E120. E186 serves as the catalytic Proton acceptor.

It belongs to the PanB family. As to quaternary structure, homodecamer; pentamer of dimers. Mg(2+) is required as a cofactor.

The protein resides in the cytoplasm. It catalyses the reaction 3-methyl-2-oxobutanoate + (6R)-5,10-methylene-5,6,7,8-tetrahydrofolate + H2O = 2-dehydropantoate + (6S)-5,6,7,8-tetrahydrofolate. It functions in the pathway cofactor biosynthesis; (R)-pantothenate biosynthesis; (R)-pantoate from 3-methyl-2-oxobutanoate: step 1/2. Catalyzes the reversible reaction in which hydroxymethyl group from 5,10-methylenetetrahydrofolate is transferred onto alpha-ketoisovalerate to form ketopantoate. The sequence is that of 3-methyl-2-oxobutanoate hydroxymethyltransferase from Xanthomonas oryzae pv. oryzae (strain MAFF 311018).